The primary structure comprises 273 residues: 4-hydroxy-tetrahydrodipicolinate reductase (273 aa).

Position 12–17 (12–17) interacts with NAD(+); that stretch reads GSGGRM. Arg39 contributes to the NADP(+) binding site. NAD(+) is bound by residues 102 to 104 and 126 to 129; these read GTT and AANF. The Proton donor/acceptor role is filled by His159. Position 160 (His160) interacts with (S)-2,3,4,5-tetrahydrodipicolinate. Lys163 functions as the Proton donor in the catalytic mechanism. A (S)-2,3,4,5-tetrahydrodipicolinate-binding site is contributed by 169-170; it reads GT.

Belongs to the DapB family. In terms of assembly, homotetramer.

The protein localises to the cytoplasm. The enzyme catalyses (S)-2,3,4,5-tetrahydrodipicolinate + NAD(+) + H2O = (2S,4S)-4-hydroxy-2,3,4,5-tetrahydrodipicolinate + NADH + H(+). It carries out the reaction (S)-2,3,4,5-tetrahydrodipicolinate + NADP(+) + H2O = (2S,4S)-4-hydroxy-2,3,4,5-tetrahydrodipicolinate + NADPH + H(+). Its pathway is amino-acid biosynthesis; L-lysine biosynthesis via DAP pathway; (S)-tetrahydrodipicolinate from L-aspartate: step 4/4. In terms of biological role, catalyzes the conversion of 4-hydroxy-tetrahydrodipicolinate (HTPA) to tetrahydrodipicolinate. The polypeptide is 4-hydroxy-tetrahydrodipicolinate reductase (Serratia proteamaculans (strain 568)).